The sequence spans 243 residues: Ribosomal RNA small subunit methyltransferase G (243 aa).

S-adenosyl-L-methionine is bound by residues glycine 79, phenylalanine 84, 130 to 131, and arginine 150; that span reads AE. Positions 219–243 are disordered; sequence EKKKQTPNKYPRKPGTPGKDPIGKK.

The protein belongs to the methyltransferase superfamily. RNA methyltransferase RsmG family.

Its subcellular location is the cytoplasm. Specifically methylates the N7 position of a guanine in 16S rRNA. The polypeptide is Ribosomal RNA small subunit methyltransferase G (Pediococcus pentosaceus (strain ATCC 25745 / CCUG 21536 / LMG 10740 / 183-1w)).